A 578-amino-acid chain; its full sequence is Arginine--tRNA ligase (578 aa).

Residues 127–137 (PNLAKEMHVGH) carry the 'HIGH' region motif.

This sequence belongs to the class-I aminoacyl-tRNA synthetase family. As to quaternary structure, monomer.

The protein localises to the cytoplasm. The catalysed reaction is tRNA(Arg) + L-arginine + ATP = L-arginyl-tRNA(Arg) + AMP + diphosphate. This chain is Arginine--tRNA ligase, found in Pseudomonas fluorescens (strain SBW25).